The following is a 431-amino-acid chain: Protein translocase subunit SecY (431 aa).

At 1 to 17 (MFKTISNFMRVSDIRNK) the chain is on the cytoplasmic side. A helical transmembrane segment spans residues 18-38 (IIFTLLMLIVFRIGAFIPVPY). Topologically, residues 39–66 (VNAEALQAQSQMGVFDLLNTFGGGALYQ) are extracellular. Residues 67-87 (FSIFAMGITPYITASIIIQLL) traverse the membrane as a helical segment. Residues 88 to 115 (QMDVVPKFTEWSKQGEVGRRKLAQFTRY) lie on the Cytoplasmic side of the membrane. A helical transmembrane segment spans residues 116 to 136 (FTIVLGFIQALGMSYGFNNLA). Over 137-145 (NGMLIEKSG) the chain is Extracellular. A helical membrane pass occupies residues 146–166 (VSTYLIIALVLTGGTAFLMWL). Residues 167-177 (GEQITSHGVGN) are Cytoplasmic-facing. A helical transmembrane segment spans residues 178-198 (GISIIIFAGIVSSIPKTIGQI). Over 199-213 (YETQFVGSNDQLFIH) the chain is Extracellular. Residues 214 to 234 (IVKVALLVIAILAVIVGVIFI) traverse the membrane as a helical segment. The Cytoplasmic segment spans residues 235 to 261 (QQAVRKIAIQYAKGTGRSPAGGGQSTH). A helical membrane pass occupies residues 262-282 (LPLKVNPAGVIPVIFAVAFLI). Over 283–308 (TPRTIASFFGTNDVTKWIQNNFDNTH) the chain is Extracellular. A helical transmembrane segment spans residues 309–329 (PVGMAIYVALIIAFTYFYAFV). Residues 330-368 (QVNPEQMADNLKKQGGYIPGVRPGKMTQDRITSILYRLT) are Cytoplasmic-facing. The next 2 membrane-spanning stretches (helical) occupy residues 369-389 (FVGSIFLAVISILPIFFIQFA) and 390-410 (GLPQSAQIGGTSLLIVVGVAL). Residues 411 to 431 (ETMKQLESQLVKRNYRGFMKN) are Cytoplasmic-facing.

Belongs to the SecY/SEC61-alpha family. Component of the Sec protein translocase complex. Heterotrimer consisting of SecY, SecE and SecG subunits. The heterotrimers can form oligomers, although 1 heterotrimer is thought to be able to translocate proteins. Interacts with the ribosome. Interacts with SecDF, and other proteins may be involved. Interacts with SecA. Interacts with FloT.

Its subcellular location is the cell membrane. The protein resides in the membrane raft. In terms of biological role, the central subunit of the protein translocation channel SecYEG. Consists of two halves formed by TMs 1-5 and 6-10. These two domains form a lateral gate at the front which open onto the bilayer between TMs 2 and 7, and are clamped together by SecE at the back. The channel is closed by both a pore ring composed of hydrophobic SecY resides and a short helix (helix 2A) on the extracellular side of the membrane which forms a plug. The plug probably moves laterally to allow the channel to open. The ring and the pore may move independently. In Bacillus subtilis (strain 168), this protein is Protein translocase subunit SecY.